We begin with the raw amino-acid sequence, 136 residues long: Protein PsiE homolog (136 aa).

A run of 4 helical transmembrane segments spans residues 15 to 35 (AMQA…VVFL), 58 to 78 (VEGL…VKYF), 82 to 102 (FHFP…RLII), and 108 to 128 (PLAV…LWLC).

Belongs to the PsiE family.

Its subcellular location is the cell inner membrane. The protein is Protein PsiE homolog of Klebsiella pneumoniae subsp. pneumoniae (strain ATCC 700721 / MGH 78578).